We begin with the raw amino-acid sequence, 584 residues long: 2-isopropylmalate synthase (584 aa).

A Pyruvate carboxyltransferase domain is found at 40–314 (PRWCAVDLRD…DPQIDFSDIE (275 aa)). The Mg(2+) site is built by D49, H253, H255, and N289. Positions 456–584 (SRDGSGSTWG…VRDAQEAAQD (129 aa)) are regulatory domain.

It belongs to the alpha-IPM synthase/homocitrate synthase family. LeuA type 2 subfamily. Homodimer. Mg(2+) is required as a cofactor.

Its subcellular location is the cytoplasm. It carries out the reaction 3-methyl-2-oxobutanoate + acetyl-CoA + H2O = (2S)-2-isopropylmalate + CoA + H(+). It functions in the pathway amino-acid biosynthesis; L-leucine biosynthesis; L-leucine from 3-methyl-2-oxobutanoate: step 1/4. Functionally, catalyzes the condensation of the acetyl group of acetyl-CoA with 3-methyl-2-oxobutanoate (2-ketoisovalerate) to form 3-carboxy-3-hydroxy-4-methylpentanoate (2-isopropylmalate). The sequence is that of 2-isopropylmalate synthase from Kocuria rhizophila (strain ATCC 9341 / DSM 348 / NBRC 103217 / DC2201).